We begin with the raw amino-acid sequence, 150 residues long: Ribonuclease H (150 aa).

The 141-residue stretch at 1–141 (MKSIEVHTDG…VDVLARNQAI (141 aa)) folds into the RNase H type-1 domain. Residues aspartate 9, glutamate 47, aspartate 69, and aspartate 133 each contribute to the Mg(2+) site.

The protein belongs to the RNase H family. In terms of assembly, monomer. It depends on Mg(2+) as a cofactor.

The protein resides in the cytoplasm. The catalysed reaction is Endonucleolytic cleavage to 5'-phosphomonoester.. In terms of biological role, endonuclease that specifically degrades the RNA of RNA-DNA hybrids. In Xanthomonas axonopodis pv. citri (strain 306), this protein is Ribonuclease H.